The chain runs to 358 residues: Methylthioribose-1-phosphate isomerase (358 aa).

Substrate-binding positions include 54-56, R96, and Q205; that span reads RGA. The active-site Proton donor is D246. 256–257 is a substrate binding site; the sequence is AK.

This sequence belongs to the eIF-2B alpha/beta/delta subunits family. MtnA subfamily.

It catalyses the reaction 5-(methylsulfanyl)-alpha-D-ribose 1-phosphate = 5-(methylsulfanyl)-D-ribulose 1-phosphate. It participates in amino-acid biosynthesis; L-methionine biosynthesis via salvage pathway; L-methionine from S-methyl-5-thio-alpha-D-ribose 1-phosphate: step 1/6. Its function is as follows. Catalyzes the interconversion of methylthioribose-1-phosphate (MTR-1-P) into methylthioribulose-1-phosphate (MTRu-1-P). This chain is Methylthioribose-1-phosphate isomerase, found in Pseudomonas entomophila (strain L48).